Reading from the N-terminus, the 1333-residue chain is ABC transporter ATP-binding protein/permease PDR18 (1333 aa).

The chain crosses the membrane as a helical span at residues 13-33 (FLEGQTFGDILCLPWTIIKGI). Residues 30-281 (IKGIRERKNR…FENMGYLCPP (252 aa)) enclose the ABC transporter 1 domain. N-linked (GlcNAc...) asparagine glycans are attached at residues Asn48, Asn144, Asn205, and Asn350. Transmembrane regions (helical) follow at residues 392–412 (YTVI…SLFY), 425–445 (SGVL…NISF), 474–494 (FPFR…LAGL), 499–519 (GAFF…TSLF), 534–554 (SIAG…IQLP), and 642–662 (FGIM…FTEY). 2 N-linked (GlcNAc...) asparagine glycosylation sites follow: Asn697 and Asn733. Residues 729-971 (FIWKNVSFTI…VIKYFEKNGA (243 aa)) form the ABC transporter 2 domain. Residue 765–772 (GESGAGKT) participates in ATP binding. The N-linked (GlcNAc...) asparagine glycan is linked to Asn958. 6 helical membrane-spanning segments follow: residues 1071 to 1091 (LLMI…VNAI), 1092 to 1112 (GLQN…PATN), 1150 to 1170 (PYHL…LGVF), 1178 to 1198 (VFYL…ALMI), 1210 to 1230 (VIVG…QPAS), and 1235 to 1255 (FWTF…LVGL). Asn1320 is a glycosylation site (N-linked (GlcNAc...) asparagine).

It belongs to the ABC transporter superfamily. ABCG family. PDR (TC 3.A.1.205) subfamily.

It is found in the membrane. The polypeptide is ABC transporter ATP-binding protein/permease PDR18 (PDR18) (Saccharomyces cerevisiae (strain ATCC 204508 / S288c) (Baker's yeast)).